A 171-amino-acid polypeptide reads, in one-letter code: Ribosome maturation factor RimP (171 aa).

This sequence belongs to the RimP family.

The protein localises to the cytoplasm. In terms of biological role, required for maturation of 30S ribosomal subunits. The chain is Ribosome maturation factor RimP from Anaeromyxobacter sp. (strain K).